Reading from the N-terminus, the 93-residue chain is Cell division protein FtsB (93 aa).

Over 1–3 (MRV) the chain is Cytoplasmic. A helical transmembrane segment spans residues 4–21 (TLVVLLALFLALQYRLWF). The Periplasmic portion of the chain corresponds to 22–93 (GKNSLPDYWR…FFRLVPDRNP (72 aa)). The stretch at 28 to 75 (DYWRLQQEVSNQKNTNENLERRNQLIYADIEDLREGEDALEERARNEL) forms a coiled coil.

The protein belongs to the FtsB family. Part of a complex composed of FtsB, FtsL and FtsQ.

It localises to the cell inner membrane. Essential cell division protein. May link together the upstream cell division proteins, which are predominantly cytoplasmic, with the downstream cell division proteins, which are predominantly periplasmic. The polypeptide is Cell division protein FtsB (Idiomarina loihiensis (strain ATCC BAA-735 / DSM 15497 / L2-TR)).